The chain runs to 249 residues: Aspartate/glutamate leucyltransferase (249 aa).

This sequence belongs to the R-transferase family. Bpt subfamily.

The protein localises to the cytoplasm. The enzyme catalyses N-terminal L-glutamyl-[protein] + L-leucyl-tRNA(Leu) = N-terminal L-leucyl-L-glutamyl-[protein] + tRNA(Leu) + H(+). The catalysed reaction is N-terminal L-aspartyl-[protein] + L-leucyl-tRNA(Leu) = N-terminal L-leucyl-L-aspartyl-[protein] + tRNA(Leu) + H(+). Its function is as follows. Functions in the N-end rule pathway of protein degradation where it conjugates Leu from its aminoacyl-tRNA to the N-termini of proteins containing an N-terminal aspartate or glutamate. The chain is Aspartate/glutamate leucyltransferase from Brucella anthropi (strain ATCC 49188 / DSM 6882 / CCUG 24695 / JCM 21032 / LMG 3331 / NBRC 15819 / NCTC 12168 / Alc 37) (Ochrobactrum anthropi).